Here is a 430-residue protein sequence, read N- to C-terminus: Trigger factor (430 aa).

Residues 163–248 (GDTAVFDFAG…LHEVKTKQVP (86 aa)) form the PPIase FKBP-type domain.

Belongs to the FKBP-type PPIase family. Tig subfamily.

It is found in the cytoplasm. It catalyses the reaction [protein]-peptidylproline (omega=180) = [protein]-peptidylproline (omega=0). In terms of biological role, involved in protein export. Acts as a chaperone by maintaining the newly synthesized protein in an open conformation. Functions as a peptidyl-prolyl cis-trans isomerase. The protein is Trigger factor of Exiguobacterium sp. (strain ATCC BAA-1283 / AT1b).